Consider the following 1109-residue polypeptide: Zinc finger E-box-binding homeobox 1 (1109 aa).

Disordered stretches follow at residues 1 to 106 and 123 to 143; these read MADG…DPNV and PEED…NGTP. Positions 15–30 are enriched in low complexity; that stretch reads PRRNNVTNYNTVVEAN. A phosphoserine mark is found at serine 31 and serine 33. The span at 87 to 98 shows a compositional bias: acidic residues; that stretch reads VKDDECDSDAEN. The C2H2-type 1 zinc finger occupies 150-173; the sequence is LTCPYCDRGYKRFTSLKEHIKYRH. Residues lysine 166 and lysine 175 each participate in a glycyl lysine isopeptide (Lys-Gly) (interchain with G-Cter in SUMO2) cross-link. 2 C2H2-type zinc fingers span residues 180-202 and 220-242; these read FSCS…MTSH and FKCT…LRIH. The C2H2-type 4; atypical zinc finger occupies 248-272; sequence YECPNCKKRFSHSGSYSSHISSKKC. Positions 278-307 are disordered; the sequence is VNGRPRSGLKTSQCSSPSLSTSPGSPTRPQ. Residue lysine 287 forms a Glycyl lysine isopeptide (Lys-Gly) (interchain with G-Cter in SUMO2) linkage. The segment covering 288–304 has biased composition (low complexity); that stretch reads TSQCSSPSLSTSPGSPT. A phosphoserine mark is found at serine 293 and serine 302. Residues lysine 311 and lysine 315 each participate in a glycyl lysine isopeptide (Lys-Gly) (interchain with G-Cter in SUMO2) cross-link. A Glycyl lysine isopeptide (Lys-Gly) (interchain with G-Cter in SUMO); alternate cross-link involves residue lysine 327. Residue lysine 327 forms a Glycyl lysine isopeptide (Lys-Gly) (interchain with G-Cter in SUMO2); alternate linkage. Glycyl lysine isopeptide (Lys-Gly) (interchain with G-Cter in SUMO2) cross-links involve residues lysine 419, lysine 473, lysine 484, lysine 495, and lysine 528. Disordered regions lie at residues 468–501, 525–566, and 614–711; these read VPQN…KDKS, PELK…SQPP, and QIPG…PQVE. Positions 483 to 501 are enriched in basic and acidic residues; that stretch reads CKSEKSPEDLTVKSEKDKS. Residues 559–618 constitute a DNA-binding region (homeobox; atypical); it reads DLSPSQPPLKNLLSLLKAYYALNAQPSTEELTKIADSVNLPLDVVKKWFEKMQAGQIPGQ. A compositionally biased stretch (polar residues) spans 654–665; the sequence is RGQSPLKMTSSP. Phosphoserine occurs at positions 657, 664, 671, and 678. Polar residues predominate over residues 673–703; sequence INGSRSCTSSPSPLNLSSARNPQGYSCVSEG. Threonine 680 carries the phosphothreonine modification. The residue at position 682 (serine 682) is a Phosphoserine. Lysine 752 is covalently cross-linked (Glycyl lysine isopeptide (Lys-Gly) (interchain with G-Cter in SUMO); alternate). Lysine 752 participates in a covalent cross-link: Glycyl lysine isopeptide (Lys-Gly) (interchain with G-Cter in SUMO2); alternate. Positions 834–873 are disordered; that stretch reads PPVKVIQPNGNQDERQDTSSEGVSVEDQNDSDCTPPKKKT. C2H2-type zinc fingers lie at residues 881–903 and 909–931; these read YACD…KYEH and HECG…MRLH. The C2H2-type 7; atypical zinc finger occupies 937–958; the sequence is YQCDKCGKRFSHSGSYSQHMNH. The segment at 968–1109 is disordered; sequence EDRDAMEQED…RLSEEKTNEA (142 aa). The span at 1012 to 1066 shows a compositional bias: acidic residues; it reads EEDEDSEKEEEEEDKEMEELQEDKECENPQEEEEEEEEEEEEEEEEEEEEAEEAE. Residues 1071-1087 are compositionally biased toward low complexity; it reads AAKTGGAVEEEAAQQAG. Basic and acidic residues predominate over residues 1097 to 1109; the sequence is ESKRLSEEKTNEA.

This sequence belongs to the delta-EF1/ZFH-1 C2H2-type zinc-finger family. As to quaternary structure, interacts (via N-terminus) with SMARCA4/BRG1. Post-translationally, ubiquitinated, leading to degradation in a proteasome-dependent manner. Deubiquitinated by USP51, leading to stabilization.

Its subcellular location is the nucleus. Its function is as follows. Acts as a transcriptional repressor. Binds to E-box sequences in the immunoglobulin heavy chain enhancer as well as in the regulatory regions of many other tissue-specific genes. Represses E-cadherin promoter and induces an epithelial-mesenchymal transition (EMT) by recruiting SMARCA4/BRG1. Represses BCL6 transcription in the presence of the corepressor CTBP1. Positively regulates neuronal differentiation. Represses RCOR1 transcription activation during neurogenesis. Represses transcription by binding to the E box (5'-CANNTG-3'). In the absence of TGFB1, acts as a repressor of COL1A2 transcription via binding to the E-box in the upstream enhancer region. This chain is Zinc finger E-box-binding homeobox 1, found in Rattus norvegicus (Rat).